The chain runs to 376 residues: Growth/differentiation factor 8 (376 aa).

The first 22 residues, M1–S22, serve as a signal peptide directing secretion. The propeptide occupies D23–R267. Cystine bridges form between C273–C283, C282–C341, C310–C373, and C314–C375.

This sequence belongs to the TGF-beta family. In terms of assembly, homodimer; disulfide-linked. As to expression, highly expressed in muscle. Also expressed in other tissues such as eye, gill, ovary, gut and brain. Very low level detected in testis. Not expressed in liver, kidney, stomach or heart.

It localises to the secreted. In terms of biological role, acts specifically as a negative regulator of skeletal muscle growth. This chain is Growth/differentiation factor 8, found in Oreochromis mossambicus (Mozambique tilapia).